Reading from the N-terminus, the 355-residue chain is SH3 domain-containing protein Dlish (355 aa).

SH3 domains lie at 57-117 (SPDS…PCNT), 183-243 (EPSG…PADS), and 287-352 (YHGT…PPAM).

In terms of assembly, interacts with dachs (via C-terminus); the interaction is direct. Interacts (via N-terminus including SH3 domain 1) with palmitoyltransferase app; this leads to palmitoylation of Dlish by app. Also interacts with dco, ft, ft-regulated E3 ubiquitin ligase Fbxl7, F-box protein slmb and SCF E3 ubiquitin-protein ligase complex component Cul1. In terms of processing, palmitoylated by app.

It is found in the cytoplasm. Its subcellular location is the cell cortex. Its function is as follows. Required for the apical cell cortex localization, total cellular level and full activity of dachs. The sequence is that of SH3 domain-containing protein Dlish from Drosophila melanogaster (Fruit fly).